The following is a 247-amino-acid chain: tRNA pseudouridine synthase A (247 aa).

Asp-52 (nucleophile) is an active-site residue. Tyr-113 serves as a coordination point for substrate.

It belongs to the tRNA pseudouridine synthase TruA family. In terms of assembly, homodimer.

It catalyses the reaction uridine(38/39/40) in tRNA = pseudouridine(38/39/40) in tRNA. Functionally, formation of pseudouridine at positions 38, 39 and 40 in the anticodon stem and loop of transfer RNAs. The chain is tRNA pseudouridine synthase A from Sinorhizobium fredii (strain NBRC 101917 / NGR234).